Reading from the N-terminus, the 274-residue chain is MGTLSVNQNKLQKRLRRLAGEAITDYNMIEDGDKVMVCLSGGKDSYTMLDVLLHLQKVAPITFEIVAVNMDQKQPGFPEHVLPAYLKELGVEYHIVEKDTYSVVKELVPEGKTTCSLCSRLRRGTLYTFADEIGATKMALGHHRDDIVETFFLNMFFNGALKGMPPKLRADDGRNVVIRPLAYCSEKDIQAYSDMKAFPIIPCNLCGSQENLQRQVVKDMLVEWERKHPGRTESIFRALQNVAPSQLADRNLFDFTSLKIDENATPRFLDVLNI.

A PP-loop motif motif is present at residues serine 40 to serine 45. [4Fe-4S] cluster contacts are provided by cysteine 115, cysteine 118, and cysteine 206.

The protein belongs to the TtcA family. In terms of assembly, homodimer. Mg(2+) serves as cofactor. It depends on [4Fe-4S] cluster as a cofactor.

It localises to the cytoplasm. The catalysed reaction is cytidine(32) in tRNA + S-sulfanyl-L-cysteinyl-[cysteine desulfurase] + AH2 + ATP = 2-thiocytidine(32) in tRNA + L-cysteinyl-[cysteine desulfurase] + A + AMP + diphosphate + H(+). Its pathway is tRNA modification. Its function is as follows. Catalyzes the ATP-dependent 2-thiolation of cytidine in position 32 of tRNA, to form 2-thiocytidine (s(2)C32). The sulfur atoms are provided by the cysteine/cysteine desulfurase (IscS) system. This Pseudomonas putida (strain ATCC 700007 / DSM 6899 / JCM 31910 / BCRC 17059 / LMG 24140 / F1) protein is tRNA-cytidine(32) 2-sulfurtransferase.